Here is a 417-residue protein sequence, read N- to C-terminus: Serine hydroxymethyltransferase (417 aa).

(6S)-5,6,7,8-tetrahydrofolate-binding positions include Leu-121 and 125-127; that span reads GHL. The residue at position 229 (Lys-229) is an N6-(pyridoxal phosphate)lysine. 355–357 contacts (6S)-5,6,7,8-tetrahydrofolate; sequence SPF.

Belongs to the SHMT family. In terms of assembly, homodimer. Requires pyridoxal 5'-phosphate as cofactor.

Its subcellular location is the cytoplasm. The enzyme catalyses (6R)-5,10-methylene-5,6,7,8-tetrahydrofolate + glycine + H2O = (6S)-5,6,7,8-tetrahydrofolate + L-serine. Its pathway is one-carbon metabolism; tetrahydrofolate interconversion. The protein operates within amino-acid biosynthesis; glycine biosynthesis; glycine from L-serine: step 1/1. In terms of biological role, catalyzes the reversible interconversion of serine and glycine with tetrahydrofolate (THF) serving as the one-carbon carrier. This reaction serves as the major source of one-carbon groups required for the biosynthesis of purines, thymidylate, methionine, and other important biomolecules. Also exhibits THF-independent aldolase activity toward beta-hydroxyamino acids, producing glycine and aldehydes, via a retro-aldol mechanism. The protein is Serine hydroxymethyltransferase of Shewanella denitrificans (strain OS217 / ATCC BAA-1090 / DSM 15013).